A 90-amino-acid polypeptide reads, in one-letter code: Repetitive proline-rich cell wall protein 3 (90 aa).

The first 24 residues, 1 to 24, serve as a signal peptide directing secretion; sequence MASFVSFLVLLLAALILMPQGLAT. Over residues 46-65 the composition is skewed to pro residues; that stretch reads KPPVYKPKPPVYKPKPPVYK. Residues 46-90 are disordered; the sequence is KPPVYKPKPPVYKPKPPVYKPPYKKPPYKKPPYGKYPPVEDNTHA.

This sequence belongs to the plant proline-rich protein superfamily. ENOD12 family.

It is found in the secreted. Its subcellular location is the cell wall. In Glycine max (Soybean), this protein is Repetitive proline-rich cell wall protein 3 (PRP3).